A 244-amino-acid chain; its full sequence is 1-(5-phosphoribosyl)-5-[(5-phosphoribosylamino)methylideneamino] imidazole-4-carboxamide isomerase (244 aa).

The Proton acceptor role is filled by D10. D129 functions as the Proton donor in the catalytic mechanism.

This sequence belongs to the HisA/HisF family.

It localises to the cytoplasm. It catalyses the reaction 1-(5-phospho-beta-D-ribosyl)-5-[(5-phospho-beta-D-ribosylamino)methylideneamino]imidazole-4-carboxamide = 5-[(5-phospho-1-deoxy-D-ribulos-1-ylimino)methylamino]-1-(5-phospho-beta-D-ribosyl)imidazole-4-carboxamide. It functions in the pathway amino-acid biosynthesis; L-histidine biosynthesis; L-histidine from 5-phospho-alpha-D-ribose 1-diphosphate: step 4/9. The protein is 1-(5-phosphoribosyl)-5-[(5-phosphoribosylamino)methylideneamino] imidazole-4-carboxamide isomerase of Rhodococcus erythropolis (strain PR4 / NBRC 100887).